The chain runs to 71 residues: Large ribosomal subunit protein bL31 (71 aa).

Residues Cys16, Cys18, Cys37, and Cys40 each coordinate Zn(2+).

It belongs to the bacterial ribosomal protein bL31 family. Type A subfamily. Part of the 50S ribosomal subunit. Zn(2+) serves as cofactor.

Functionally, binds the 23S rRNA. The protein is Large ribosomal subunit protein bL31 of Aeromonas salmonicida (strain A449).